The primary structure comprises 162 residues: MRLCGLLIFLSYIVYVDNAVTANFISDPRSMFPKMVRTKNAFHFLQYFMGTFRRMFRNKTEMIEHFNYYDDQVKGTDCHIQEELDFARFKSYFDRYTRTHYNPEIRIIFAIMTKDSSHMTVEFHVTSQSWFGFEDHFHMIIRAVNDENVGWGVRYLSMAFNC.

The first 21 residues, 1-21, serve as a signal peptide directing secretion; sequence MRLCGLLIFLSYIVYVDNAVT.

This is an uncharacterized protein from Caenorhabditis elegans.